Reading from the N-terminus, the 758-residue chain is Vitamin K-dependent gamma-carboxylase (758 aa).

Positions 1–34 (MAVSARPARAPRGSDKVKKDKAAQTSGPRQGSRM) are disordered. The residue at position 2 (Ala-2) is an N-acetylalanine. Over 2–60 (AVSARPARAPRGSDKVKKDKAAQTSGPRQGSRMGKLLGFEWTDVSSWERLVTLLNRPTD) the chain is Cytoplasmic. Over residues 12-22 (RGSDKVKKDKA) the composition is skewed to basic and acidic residues. The helical transmembrane segment at 61 to 81 (PAGLAVFRFLFGLMMVLDIPQ) threads the bilayer. The Lumenal segment spans residues 82-113 (ERGLSSLDRRYLDGLEVCRFPLLDALQPLPLD). An intrachain disulfide couples Cys-99 to Cys-450. A helical transmembrane segment spans residues 114 to 134 (WMYLIYTIMFLGALGMMLGLC). Topologically, residues 135–136 (YR) are cytoplasmic. Residues 137–157 (ISCVLFLLPYWYVFLLDKTSW) traverse the membrane as a helical segment. At 158-292 (NNHSYLYGLL…VSYFHCMNSQ (135 aa)) the chain is on the lumenal side. Residues 293 to 313 (LFSIGMFPYVMLASSPLFCSP) traverse the membrane as a helical segment. Topologically, residues 314–363 (EWPRKLVAHCPKKLQELLPLRTAPQPSTSCMYKRSRARGSQKPGLRHKLS) are cytoplasmic. Residues 364–384 (TAFTLLYLLEQLFLPYSHFLT) traverse the membrane as a helical segment. The Lumenal portion of the chain corresponds to 385–758 (QGYNNWTNGL…PDSHPVHSEF (374 aa)). A disordered region spans residues 727–758 (PFEPAGEPSPVNTDSSNPNPPEPDSHPVHSEF). A compositionally biased stretch (basic and acidic residues) spans 749-758 (PDSHPVHSEF).

Monomer. May interact with CALU. Post-translationally, the N-terminus is blocked.

It localises to the endoplasmic reticulum membrane. The enzyme catalyses 4-carboxy-L-glutamyl-[protein] + 2,3-epoxyphylloquinone + H2O + H(+) = phylloquinol + L-glutamyl-[protein] + CO2 + O2. Functionally, mediates the vitamin K-dependent carboxylation of glutamate residues to calcium-binding gamma-carboxyglutamate (Gla) residues with the concomitant conversion of the reduced hydroquinone form of vitamin K to vitamin K epoxide. Catalyzes gamma-carboxylation of various proteins, such as blood coagulation factors (F2, F7, F9 and F10), osteocalcin (BGLAP) or matrix Gla protein (MGP). This Bos taurus (Bovine) protein is Vitamin K-dependent gamma-carboxylase (GGCX).